We begin with the raw amino-acid sequence, 1256 residues long: Topoisomerase 1-associated factor 1 (1256 aa).

Acidic residues predominate over residues 26-38 (GFIVSDEENDNLE). 4 disordered regions span residues 26-58 (GFIV…VDEY), 695-725 (SKKK…RTHA), 1052-1121 (SGAE…EAFF), and 1176-1256 (SDGV…DEDE). Positions 39–53 (NENRNERDPDSRNQD) are enriched in basic and acidic residues. Over residues 1060-1086 (GKARKRGNKSSSTIKKKSLQSRSRRPP) the composition is skewed to basic residues. 2 stretches are compositionally biased toward basic and acidic residues: residues 1097-1110 (ELRK…FVHD) and 1179-1190 (VDTHSHQDDKSQ). A compositionally biased stretch (acidic residues) spans 1194-1204 (SENEDSSEEVS). Positions 1222–1231 (DNNVSENYVS) are enriched in low complexity.

This sequence belongs to the timeless family. Component of the fork protection complex (FPC) consisting of TOF1 and CSM3.

It is found in the nucleus. Functionally, forms a fork protection complex (FPC) with CSM3 and which is required for chromosome segregation during meiosis and DNA damage repair. FPC coordinates leading and lagging strand synthesis and moves with the replication fork. FPC stabilizes replication forks in a configuration that is recognized by replication checkpoint sensors. In Scheffersomyces stipitis (strain ATCC 58785 / CBS 6054 / NBRC 10063 / NRRL Y-11545) (Yeast), this protein is Topoisomerase 1-associated factor 1 (TOF1).